Consider the following 299-residue polypeptide: Probable alpha-L-glutamate ligase (299 aa).

Positions 112 to 294 (LQLLTEQGIA…IALQMIVHIE (183 aa)) constitute an ATP-grasp domain. Residues Lys-148, 185–186 (DF), Asp-194, and 218–220 (RAN) contribute to the ATP site. Residues Asp-255, Glu-267, and Asn-269 each contribute to the Mg(2+) site. Positions 255, 267, and 269 each coordinate Mn(2+).

This sequence belongs to the RimK family. Mg(2+) is required as a cofactor. It depends on Mn(2+) as a cofactor.

This is Probable alpha-L-glutamate ligase from Histophilus somni (strain 2336) (Haemophilus somnus).